We begin with the raw amino-acid sequence, 404 residues long: DNA gyrase subunit B (404 aa).

A Toprim domain is found at 321–404; that stretch reads SEIYIVEGDS…VIIMTDADVD (84 aa). Residues Glu327, Asp400, and Asp402 each contribute to the Mg(2+) site.

The protein belongs to the type II topoisomerase GyrB family. Heterotetramer, composed of two GyrA and two GyrB chains. In the heterotetramer, GyrA contains the active site tyrosine that forms a transient covalent intermediate with DNA, while GyrB binds cofactors and catalyzes ATP hydrolysis. It depends on Mg(2+) as a cofactor. Requires Mn(2+) as cofactor. The cofactor is Ca(2+).

The protein localises to the cytoplasm. It catalyses the reaction ATP-dependent breakage, passage and rejoining of double-stranded DNA.. In terms of biological role, a type II topoisomerase that negatively supercoils closed circular double-stranded (ds) DNA in an ATP-dependent manner to modulate DNA topology and maintain chromosomes in an underwound state. Negative supercoiling favors strand separation, and DNA replication, transcription, recombination and repair, all of which involve strand separation. Also able to catalyze the interconversion of other topological isomers of dsDNA rings, including catenanes and knotted rings. Type II topoisomerases break and join 2 DNA strands simultaneously in an ATP-dependent manner. The polypeptide is DNA gyrase subunit B (gyrB) (Bacillus cereus).